The following is a 409-amino-acid chain: UDP-N-acetylglucosamine--N-acetylmuramyl-(pentapeptide) pyrophosphoryl-undecaprenol N-acetylglucosamine transferase (409 aa).

UDP-N-acetyl-alpha-D-glucosamine is bound by residues 11 to 13 (TGG), asparagine 125, arginine 169, serine 199, and glutamine 299.

The protein belongs to the glycosyltransferase 28 family. MurG subfamily.

The protein localises to the cell membrane. The catalysed reaction is di-trans,octa-cis-undecaprenyl diphospho-N-acetyl-alpha-D-muramoyl-L-alanyl-D-glutamyl-meso-2,6-diaminopimeloyl-D-alanyl-D-alanine + UDP-N-acetyl-alpha-D-glucosamine = di-trans,octa-cis-undecaprenyl diphospho-[N-acetyl-alpha-D-glucosaminyl-(1-&gt;4)]-N-acetyl-alpha-D-muramoyl-L-alanyl-D-glutamyl-meso-2,6-diaminopimeloyl-D-alanyl-D-alanine + UDP + H(+). Its pathway is cell wall biogenesis; peptidoglycan biosynthesis. Cell wall formation. Catalyzes the transfer of a GlcNAc subunit on undecaprenyl-pyrophosphoryl-MurNAc-pentapeptide (lipid intermediate I) to form undecaprenyl-pyrophosphoryl-MurNAc-(pentapeptide)GlcNAc (lipid intermediate II). The chain is UDP-N-acetylglucosamine--N-acetylmuramyl-(pentapeptide) pyrophosphoryl-undecaprenol N-acetylglucosamine transferase from Clostridioides difficile (strain 630) (Peptoclostridium difficile).